Here is a 196-residue protein sequence, read N- to C-terminus: Ribonuclease HII (196 aa).

In terms of domain architecture, RNase H type-2 spans 9–196 (KLVAGVDEVG…KPVRHALGIE (188 aa)). The a divalent metal cation site is built by aspartate 15, glutamate 16, and aspartate 107.

It belongs to the RNase HII family. Requires Mn(2+) as cofactor. The cofactor is Mg(2+).

The protein localises to the cytoplasm. It catalyses the reaction Endonucleolytic cleavage to 5'-phosphomonoester.. Functionally, endonuclease that specifically degrades the RNA of RNA-DNA hybrids. The sequence is that of Ribonuclease HII from Aeromonas salmonicida (strain A449).